The chain runs to 666 residues: NAD(P)H-quinone oxidoreductase subunit 5, organellar chromatophore 1 (666 aa).

A run of 15 helical transmembrane segments spans residues 8–28, 41–61, 90–110, 121–141, 145–165, 190–210, 220–240, 259–279, 293–313, 328–348, 396–416, 428–448, 497–517, 542–562, and 643–663; these read LVWL…FGLI, AALL…MVLA, VDPI…LVMV, SYVR…ALIL, LLEI…LIGF, FLLG…QIVA, GSIP…GPMA, TPIS…FLVA, IIVA…ALIQ, LGYM…FHLI, GITF…AGFW, SYPL…FYMF, TLPL…GSPW, FLPL…IATI, and GRPQ…IVIF.

It belongs to the complex I subunit 5 family. In terms of assembly, NDH is composed of at least 16 different subunits, 5 of which are encoded in the nucleus.

It is found in the plastid. The protein resides in the organellar chromatophore thylakoid membrane. The enzyme catalyses a plastoquinone + NADH + (n+1) H(+)(in) = a plastoquinol + NAD(+) + n H(+)(out). The catalysed reaction is a plastoquinone + NADPH + (n+1) H(+)(in) = a plastoquinol + NADP(+) + n H(+)(out). Functionally, NDH shuttles electrons from NAD(P)H:plastoquinone, via FMN and iron-sulfur (Fe-S) centers, to quinones in the photosynthetic chain and possibly in a chloroplast respiratory chain. The immediate electron acceptor for the enzyme in this species is believed to be plastoquinone. Couples the redox reaction to proton translocation, and thus conserves the redox energy in a proton gradient. This Paulinella chromatophora protein is NAD(P)H-quinone oxidoreductase subunit 5, organellar chromatophore 1 (ndhF1).